Consider the following 76-residue polypeptide: Esculentin-2MT1 (76 aa).

Positions 1-22 are cleaved as a signal peptide; it reads MFTMKKPLLLLFFLGTISLSLC. A propeptide spanning residues 23–37 is cleaved from the precursor; sequence EEERNADEDDGEKEV. Cys-70 and Cys-76 form a disulfide bridge.

It belongs to the frog skin active peptide (FSAP) family. Esculentin subfamily. In terms of tissue distribution, expressed by the skin glands.

The protein resides in the secreted. Antimicrobial peptide. The protein is Esculentin-2MT1 of Amolops mantzorum (Sichuan torrent frog).